The chain runs to 573 residues: Pyrophosphate--fructose 6-phosphate 1-phosphotransferase (573 aa).

Glycine 90 is a diphosphate binding site. Residue aspartate 184 participates in Mg(2+) binding. Substrate contacts are provided by residues 212–214, 251–252, 259–261, glutamate 320, and 434–437; these read TID, KY, MGR, and YEGR. The active-site Proton acceptor is the aspartate 214.

Belongs to the phosphofructokinase type A (PFKA) family. PPi-dependent PFK group II subfamily. Clade 'Long' sub-subfamily. Homodimer. Requires Mg(2+) as cofactor.

The protein localises to the cytoplasm. It carries out the reaction beta-D-fructose 6-phosphate + diphosphate = beta-D-fructose 1,6-bisphosphate + phosphate + H(+). It functions in the pathway carbohydrate degradation; glycolysis; D-glyceraldehyde 3-phosphate and glycerone phosphate from D-glucose: step 3/4. With respect to regulation, non-allosteric. In terms of biological role, catalyzes the phosphorylation of D-fructose 6-phosphate, the first committing step of glycolysis. Uses inorganic phosphate (PPi) as phosphoryl donor instead of ATP like common ATP-dependent phosphofructokinases (ATP-PFKs), which renders the reaction reversible, and can thus function both in glycolysis and gluconeogenesis. Consistently, PPi-PFK can replace the enzymes of both the forward (ATP-PFK) and reverse (fructose-bisphosphatase (FBPase)) reactions. This chain is Pyrophosphate--fructose 6-phosphate 1-phosphotransferase, found in Treponema pallidum (strain Nichols).